The chain runs to 197 residues: UPF0314 protein NGR_c32320 (197 aa).

The next 3 membrane-spanning stretches (helical) occupy residues 16-36, 66-86, and 152-172; these read WIWL…QHLM, WYTP…YLLL, and LPVA…GWII.

Belongs to the UPF0314 family.

Its subcellular location is the cell membrane. This is UPF0314 protein NGR_c32320 from Sinorhizobium fredii (strain NBRC 101917 / NGR234).